We begin with the raw amino-acid sequence, 730 residues long: Meiotically up-regulated gene 70 protein (730 aa).

The interval 1–27 is disordered; that stretch reads MTVGTLSVVSSTASDTASHVSDTRKRQ. Over residues 7-20 the composition is skewed to low complexity; sequence SVVSSTASDTASHV. 4 consecutive CBS domains span residues 69 to 127, 135 to 200, 263 to 319, and 328 to 385; these read ALDP…LNAR, MSTS…RIAR, SSEE…GLDP, and MTPH…PEEE. Helical transmembrane passes span 290 to 310 and 358 to 378; these read AVLVMDNGAVSGVFTAHDVVL and VVDESDAIIGMLSLFHLATAI. The interval 420–517 is disordered; the sequence is ENYDVNPPLP…ENGSNSFAAS (98 aa). Composition is skewed to polar residues over residues 458 to 470 and 480 to 515; these read AWQNENLSSNNKP and YNFSNNPPTAMSEQSFHPSVSQKPMDTPENGSNSFA. Residues 572 to 649 form the PB1 domain; sequence PSQFTIKYRS…ARRRGLPRLE (78 aa). The chain crosses the membrane as a helical span at residues 706 to 726; it reads PIYIGIVSSSIVILAVSMWYL.

It localises to the cytoplasm. It is found in the nucleus membrane. Functionally, has a role in meiosis. This is Meiotically up-regulated gene 70 protein (mug70) from Schizosaccharomyces pombe (strain 972 / ATCC 24843) (Fission yeast).